We begin with the raw amino-acid sequence, 122 residues long: Large ribosomal subunit protein uL14c (122 aa).

It belongs to the universal ribosomal protein uL14 family. In terms of assembly, part of the 50S ribosomal subunit.

The protein localises to the plastid. It localises to the chloroplast. Its function is as follows. Binds to 23S rRNA. This Illicium oligandrum (Star anise) protein is Large ribosomal subunit protein uL14c.